Reading from the N-terminus, the 313-residue chain is Ribosomal RNA small subunit methyltransferase H (313 aa).

S-adenosyl-L-methionine-binding positions include 48–50 (GGH), Asp-68, Phe-102, Asp-120, and Gln-127. The segment at 290–313 (TATEEEIDRNPRSRSAKLRAAARK) is disordered. Residues 301-313 (RSRSAKLRAAARK) show a composition bias toward basic residues.

It belongs to the methyltransferase superfamily. RsmH family.

It is found in the cytoplasm. It catalyses the reaction cytidine(1402) in 16S rRNA + S-adenosyl-L-methionine = N(4)-methylcytidine(1402) in 16S rRNA + S-adenosyl-L-homocysteine + H(+). Functionally, specifically methylates the N4 position of cytidine in position 1402 (C1402) of 16S rRNA. The sequence is that of Ribosomal RNA small subunit methyltransferase H from Koribacter versatilis (strain Ellin345).